The chain runs to 130 residues: MSKPRIALIAHDAKKDDIVALTGQFRETLAQCRLVATGTTGGRIAAAHGLEVERKLSGPLGGDLQIGAELADGRVDIVVFLRDPMTAQPHDPDITALVRACDVHDVPVATNVATARMLLDDLARNMQDVC.

One can recognise an MGS-like domain in the interval 1 to 130; it reads MSKPRIALIA…DLARNMQDVC (130 aa). Substrate contacts are provided by residues histidine 11, lysine 15, 37–40, and 57–58; these read TGTT and SG. The active-site Proton donor/acceptor is the aspartate 63. Histidine 90 serves as a coordination point for substrate.

The protein belongs to the methylglyoxal synthase family.

The catalysed reaction is dihydroxyacetone phosphate = methylglyoxal + phosphate. Catalyzes the formation of methylglyoxal from dihydroxyacetone phosphate. This Burkholderia ambifaria (strain MC40-6) protein is Methylglyoxal synthase.